Consider the following 301-residue polypeptide: ATP synthase gamma chain (301 aa).

The protein belongs to the ATPase gamma chain family. F-type ATPases have 2 components, CF(1) - the catalytic core - and CF(0) - the membrane proton channel. CF(1) has five subunits: alpha(3), beta(3), gamma(1), delta(1), epsilon(1). CF(0) has three main subunits: a, b and c.

The protein resides in the cell inner membrane. Functionally, produces ATP from ADP in the presence of a proton gradient across the membrane. The gamma chain is believed to be important in regulating ATPase activity and the flow of protons through the CF(0) complex. The polypeptide is ATP synthase gamma chain (Bordetella avium (strain 197N)).